Here is a 366-residue protein sequence, read N- to C-terminus: UDP-N-acetylenolpyruvoylglucosamine reductase (366 aa).

An FAD-binding PCMH-type domain is found at 29–203 (VGPVARTLVT…LEVEFALDAS (175 aa)). Arg177 is a catalytic residue. Residue Ser258 is the Proton donor of the active site. Glu358 is a catalytic residue.

The protein belongs to the MurB family. FAD is required as a cofactor.

Its subcellular location is the cytoplasm. It catalyses the reaction UDP-N-acetyl-alpha-D-muramate + NADP(+) = UDP-N-acetyl-3-O-(1-carboxyvinyl)-alpha-D-glucosamine + NADPH + H(+). It participates in cell wall biogenesis; peptidoglycan biosynthesis. Functionally, cell wall formation. This chain is UDP-N-acetylenolpyruvoylglucosamine reductase, found in Mycobacterium marinum (strain ATCC BAA-535 / M).